The following is a 191-amino-acid chain: Peptidyl-tRNA hydrolase (191 aa).

Residue Y14 coordinates tRNA. H19 acts as the Proton acceptor in catalysis. Residues Y64, N66, and N112 each contribute to the tRNA site.

The protein belongs to the PTH family. In terms of assembly, monomer.

Its subcellular location is the cytoplasm. The enzyme catalyses an N-acyl-L-alpha-aminoacyl-tRNA + H2O = an N-acyl-L-amino acid + a tRNA + H(+). In terms of biological role, hydrolyzes ribosome-free peptidyl-tRNAs (with 1 or more amino acids incorporated), which drop off the ribosome during protein synthesis, or as a result of ribosome stalling. Functionally, catalyzes the release of premature peptidyl moieties from peptidyl-tRNA molecules trapped in stalled 50S ribosomal subunits, and thus maintains levels of free tRNAs and 50S ribosomes. The protein is Peptidyl-tRNA hydrolase of Lachnoclostridium phytofermentans (strain ATCC 700394 / DSM 18823 / ISDg) (Clostridium phytofermentans).